The primary structure comprises 261 residues: tRNA pseudouridine synthase A (261 aa).

The active-site Nucleophile is Asp51. Tyr109 contacts substrate.

Belongs to the tRNA pseudouridine synthase TruA family. Homodimer.

It catalyses the reaction uridine(38/39/40) in tRNA = pseudouridine(38/39/40) in tRNA. Its function is as follows. Formation of pseudouridine at positions 38, 39 and 40 in the anticodon stem and loop of transfer RNAs. This Tolumonas auensis (strain DSM 9187 / NBRC 110442 / TA 4) protein is tRNA pseudouridine synthase A.